An 861-amino-acid chain; its full sequence is DNA mismatch repair protein MutS (861 aa).

609-616 (GPNMAGKS) is an ATP binding site.

Belongs to the DNA mismatch repair MutS family.

In terms of biological role, this protein is involved in the repair of mismatches in DNA. It is possible that it carries out the mismatch recognition step. This protein has a weak ATPase activity. The chain is DNA mismatch repair protein MutS from Borrelia hermsii (strain HS1 / DAH).